We begin with the raw amino-acid sequence, 299 residues long: NAD kinase (299 aa).

The active-site Proton acceptor is the Asp71. Residues 71–72 (DG), 145–146 (ND), Arg173, Asp175, 186–191 (TAYSLS), Ala210, and Gln248 contribute to the NAD(+) site.

It belongs to the NAD kinase family. Requires a divalent metal cation as cofactor.

It is found in the cytoplasm. The catalysed reaction is NAD(+) + ATP = ADP + NADP(+) + H(+). Its function is as follows. Involved in the regulation of the intracellular balance of NAD and NADP, and is a key enzyme in the biosynthesis of NADP. Catalyzes specifically the phosphorylation on 2'-hydroxyl of the adenosine moiety of NAD to yield NADP. This is NAD kinase from Bordetella pertussis (strain Tohama I / ATCC BAA-589 / NCTC 13251).